Consider the following 389-residue polypeptide: tRNA-specific 2-thiouridylase MnmA (389 aa).

Residues 35–42 (GMSGGVDS) and Met61 each bind ATP. An interaction with target base in tRNA region spans residues 121–123 (NPD). Catalysis depends on Cys126, which acts as the Nucleophile. Cys126 and Cys223 are disulfide-bonded. Gly151 is a binding site for ATP. Positions 173–175 (KDQ) are interaction with tRNA. Cys223 serves as the catalytic Cysteine persulfide intermediate. The tract at residues 335-336 (RY) is interaction with tRNA.

This sequence belongs to the MnmA/TRMU family.

It is found in the cytoplasm. The catalysed reaction is S-sulfanyl-L-cysteinyl-[protein] + uridine(34) in tRNA + AH2 + ATP = 2-thiouridine(34) in tRNA + L-cysteinyl-[protein] + A + AMP + diphosphate + H(+). Catalyzes the 2-thiolation of uridine at the wobble position (U34) of tRNA, leading to the formation of s(2)U34. In Mannheimia succiniciproducens (strain KCTC 0769BP / MBEL55E), this protein is tRNA-specific 2-thiouridylase MnmA.